The chain runs to 206 residues: MSFLTEWLTTIVLFILFAIVIDMLLPSSSMQKYAKMVVSLLLIVVMLTPIFKLFKTDPEVIFEYLTKNGQSESADIKNQINSKKIEIQASQRAYILEEMAVQLKKKAEERFSHDEYKVGRIKLTAGEKVDSEEDIKTISVYMAPSSEKTVQTVAPVHIDTDHAYVTKEAAEQKEAKQIQTQLADIWEIGSEKITVHMEGGESVGNE.

2 consecutive transmembrane segments (helical) span residues 1–21 and 34–54; these read MSFLTEWLTTIVLFILFAIVI and AKMVVSLLLIVVMLTPIFKLF.

It localises to the cell membrane. The polypeptide is Stage III sporulation protein AF (spoIIIAF) (Bacillus subtilis (strain 168)).